We begin with the raw amino-acid sequence, 454 residues long: tRNA modification GTPase MnmE (454 aa).

R23, E80, and K120 together coordinate (6S)-5-formyl-5,6,7,8-tetrahydrofolate. The 162-residue stretch at 216-377 (GMKVVIAGRP…LRNHLKQSMG (162 aa)) folds into the TrmE-type G domain. Residue N226 coordinates K(+). Residues 226-231 (NAGKSS), 245-251 (TDIAGTT), 270-273 (DTAG), 335-338 (NKAD), and 358-360 (SAR) contribute to the GTP site. S230 serves as a coordination point for Mg(2+). Positions 245, 247, and 250 each coordinate K(+). T251 contributes to the Mg(2+) binding site. K454 contributes to the (6S)-5-formyl-5,6,7,8-tetrahydrofolate binding site.

Belongs to the TRAFAC class TrmE-Era-EngA-EngB-Septin-like GTPase superfamily. TrmE GTPase family. As to quaternary structure, homodimer. Heterotetramer of two MnmE and two MnmG subunits. Requires K(+) as cofactor.

It is found in the cytoplasm. Exhibits a very high intrinsic GTPase hydrolysis rate. Involved in the addition of a carboxymethylaminomethyl (cmnm) group at the wobble position (U34) of certain tRNAs, forming tRNA-cmnm(5)s(2)U34. The polypeptide is tRNA modification GTPase MnmE (Salmonella typhi).